The following is a 589-amino-acid chain: Mitogen-activated protein kinase 8 (589 aa).

Residues 18-56 form a disordered region; sequence RPSSSSSSSSSNNNNNNHEQPIFNSSSFSSSSNPNHSAN. Composition is skewed to low complexity over residues 20 to 34 and 41 to 56; these read SSSS…NNNN and NSSS…HSAN. A Protein kinase domain is found at 104-395; the sequence is YQIQEVVGKG…AEDALADPYF (292 aa). ATP-binding positions include 110-118 and Lys-133; that span reads VGKGSYGVV. Asp-230 acts as the Proton acceptor in catalysis. A Phosphothreonine modification is found at Thr-266. The TXY motif lies at 266-268; it reads TDY. Residue Tyr-268 is modified to Phosphotyrosine. Thr-271 bears the Phosphothreonine mark. Residues 474-589 are disordered; the sequence is NQGKPGAAGG…TDKVASLHNS (116 aa).

Belongs to the protein kinase superfamily. CMGC Ser/Thr protein kinase family. MAP kinase subfamily. As to quaternary structure, interacts with CAM3, CAM4 and CAM7 in an calcium-dependent manner. Post-translationally, dually phosphorylated on Thr-266 and Tyr-268, which activates the enzyme. Autophosphorylated. In terms of tissue distribution, ubiquitous.

The enzyme catalyses L-seryl-[protein] + ATP = O-phospho-L-seryl-[protein] + ADP + H(+). It catalyses the reaction L-threonyl-[protein] + ATP = O-phospho-L-threonyl-[protein] + ADP + H(+). Activated by threonine and tyrosine phosphorylation. Activated by two independent mechanisms, the binding of CAMs in a calcium-dependent manner and the phosphorylation by MAP kinase kinase MKK3. Activated in response to mechanical wounding, hydrogen peroxide and jasmonic acid (JA). MKK3-MPK8 and CAMs-MPK8 modules negatively regulates ROS accumulation through controlling expression of the RBOHD gene during wounding. This chain is Mitogen-activated protein kinase 8 (MPK8), found in Arabidopsis thaliana (Mouse-ear cress).